The sequence spans 401 residues: Probable cysteine desulfurase (401 aa).

An N6-(pyridoxal phosphate)lysine modification is found at K223.

It belongs to the class-V pyridoxal-phosphate-dependent aminotransferase family. Csd subfamily. The cofactor is pyridoxal 5'-phosphate.

The catalysed reaction is (sulfur carrier)-H + L-cysteine = (sulfur carrier)-SH + L-alanine. Catalyzes the removal of elemental sulfur and selenium atoms from L-cysteine, L-cystine, L-selenocysteine, and L-selenocystine to produce L-alanine. This Pseudomonas aeruginosa (strain ATCC 15692 / DSM 22644 / CIP 104116 / JCM 14847 / LMG 12228 / 1C / PRS 101 / PAO1) protein is Probable cysteine desulfurase (csd).